The chain runs to 75 residues: Movement protein TGBp3 (75 aa).

Residues 1–2 lie on the Lumenal side of the membrane; that stretch reads MR. The chain crosses the membrane as a helical span at residues 3–23; the sequence is VLDLILALITAAVVGYTIALV. The Cytoplasmic portion of the chain corresponds to 24 to 75; it reads SNSGCYVHFDGRSATTTCPPGPWVESIANGLYTAGLARPHPEPECERRQSSW.

The protein belongs to the Tymovirales TGBp3 protein family.

Its subcellular location is the host endoplasmic reticulum membrane. In terms of biological role, plays a role in viral cell-to-cell propagation, by facilitating genome transport to neighboring plant cells through plasmosdesmata. May induce the formation of granular vesicles derived from the Endoplasmic reticulum, which align on actin filaments. The chain is Movement protein TGBp3 from Strawberry mild yellow edge-associated virus (SMYEaV).